Consider the following 147-residue polypeptide: Large ribosomal subunit protein uL15 (147 aa).

The segment at 1–59 is disordered; that stretch reads MKLYELKPAPGSKKNRKRVGRGESSGHGKTSTRGHKGQWARSGGGVRPGFEGGQMPLTR. The span at 42 to 52 shows a compositional bias: gly residues; it reads SGGGVRPGFEG.

The protein belongs to the universal ribosomal protein uL15 family. As to quaternary structure, part of the 50S ribosomal subunit.

In terms of biological role, binds to the 23S rRNA. The chain is Large ribosomal subunit protein uL15 from Caldicellulosiruptor bescii (strain ATCC BAA-1888 / DSM 6725 / KCTC 15123 / Z-1320) (Anaerocellum thermophilum).